A 158-amino-acid chain; its full sequence is ATP synthase subunit b', chloroplastic (158 aa).

The helical transmembrane segment at 25–45 threads the bilayer; it reads ATLPLMALQFIILTTILNFIF.

Belongs to the ATPase B chain family. In terms of assembly, F-type ATPases have 2 components, F(1) - the catalytic core - and F(0) - the membrane proton channel. F(1) has five subunits: alpha(3), beta(3), gamma(1), delta(1), epsilon(1). F(0) has four main subunits: a(1), b(1), b'(1) and c(10-14). The alpha and beta chains form an alternating ring which encloses part of the gamma chain. F(1) is attached to F(0) by a central stalk formed by the gamma and epsilon chains, while a peripheral stalk is formed by the delta, b and b' chains.

The protein localises to the plastid. Its subcellular location is the chloroplast thylakoid membrane. Functionally, f(1)F(0) ATP synthase produces ATP from ADP in the presence of a proton or sodium gradient. F-type ATPases consist of two structural domains, F(1) containing the extramembraneous catalytic core and F(0) containing the membrane proton channel, linked together by a central stalk and a peripheral stalk. During catalysis, ATP synthesis in the catalytic domain of F(1) is coupled via a rotary mechanism of the central stalk subunits to proton translocation. Component of the F(0) channel, it forms part of the peripheral stalk, linking F(1) to F(0). The b'-subunit is a diverged and duplicated form of b found in plants and photosynthetic bacteria. This is ATP synthase subunit b', chloroplastic from Gracilaria tenuistipitata var. liui (Red alga).